A 339-amino-acid polypeptide reads, in one-letter code: Transcription initiation factor IIB (339 aa).

The TFIIB-type zinc-finger motif lies at 39 to 70 (EELICPMCGSKNIIKDYERAEIVCETCGCVLQ). The Zn(2+) site is built by Cys43, Cys46, Cys62, and Cys65. Repeat copies occupy residues 156–239 (SELD…SREL) and 250–331 (DYVP…ELTE).

It belongs to the TFIIB family.

Functionally, stabilizes TBP binding to an archaeal box-A promoter. Also responsible for recruiting RNA polymerase II to the pre-initiation complex (DNA-TBP-TFIIB). In Methanothermococcus thermolithotrophicus (Methanococcus thermolithotrophicus), this protein is Transcription initiation factor IIB.